Here is a 502-residue protein sequence, read N- to C-terminus: 4,4'-diapophytoene desaturase (4,4'-diaponeurosporene-forming) (502 aa).

Position 5–17 (5–17) interacts with FAD; sequence VIGAGVTGLAAAA.

The protein belongs to the carotenoid/retinoid oxidoreductase family. CrtN subfamily.

The enzyme catalyses 15-cis-4,4'-diapophytoene + 3 FAD + 3 H(+) = all-trans-4,4'-diaponeurosporene + 3 FADH2. It functions in the pathway carotenoid biosynthesis; staphyloxanthin biosynthesis; staphyloxanthin from farnesyl diphosphate: step 2/5. Functionally, involved in the biosynthesis of the yellow-orange carotenoid staphyloxanthin, which plays a role in the virulence via its protective function against oxidative stress. Catalyzes three successive dehydrogenation reactions that lead to the introduction of three double bonds into 4,4'-diapophytoene (dehydrosqualene), with 4,4'-diapophytofluene and 4,4'-diapo-zeta-carotene as intermediates, and 4,4'-diaponeurosporene (the major deep-yellow pigment in staphylococci strains) as the end product. This chain is 4,4'-diapophytoene desaturase (4,4'-diaponeurosporene-forming), found in Staphylococcus aureus (strain MRSA252).